The primary structure comprises 382 residues: Phosphatidylglycerol--prolipoprotein diacylglyceryl transferase (382 aa).

3 helical membrane-spanning segments follow: residues 18–38 (IQWY…MFVF), 53–73 (FFIF…SFVI), and 91–111 (LAIQ…FNFF). Arg162 serves as a coordination point for a 1,2-diacyl-sn-glycero-3-phospho-(1'-sn-glycerol). 4 helical membrane passes run 213–233 (IPLF…IYFV), 243–263 (GTIG…LENF), 274–294 (ITTS…CQFI), and 302–322 (FWTY…TTLF).

It belongs to the Lgt family.

It localises to the cell membrane. It carries out the reaction L-cysteinyl-[prolipoprotein] + a 1,2-diacyl-sn-glycero-3-phospho-(1'-sn-glycerol) = an S-1,2-diacyl-sn-glyceryl-L-cysteinyl-[prolipoprotein] + sn-glycerol 1-phosphate + H(+). The protein operates within protein modification; lipoprotein biosynthesis (diacylglyceryl transfer). Catalyzes the transfer of the diacylglyceryl group from phosphatidylglycerol to the sulfhydryl group of the N-terminal cysteine of a prolipoprotein, the first step in the formation of mature lipoproteins. The protein is Phosphatidylglycerol--prolipoprotein diacylglyceryl transferase of Mycoplasma genitalium (strain ATCC 33530 / DSM 19775 / NCTC 10195 / G37) (Mycoplasmoides genitalium).